The chain runs to 406 residues: 4-hydroxy-3-methylbut-2-en-1-yl diphosphate synthase (flavodoxin) (406 aa).

[4Fe-4S] cluster is bound by residues Cys297, Cys300, Cys343, and Glu350.

Belongs to the IspG family. [4Fe-4S] cluster serves as cofactor.

It catalyses the reaction (2E)-4-hydroxy-3-methylbut-2-enyl diphosphate + oxidized [flavodoxin] + H2O + 2 H(+) = 2-C-methyl-D-erythritol 2,4-cyclic diphosphate + reduced [flavodoxin]. The protein operates within isoprenoid biosynthesis; isopentenyl diphosphate biosynthesis via DXP pathway; isopentenyl diphosphate from 1-deoxy-D-xylulose 5-phosphate: step 5/6. Functionally, converts 2C-methyl-D-erythritol 2,4-cyclodiphosphate (ME-2,4cPP) into 1-hydroxy-2-methyl-2-(E)-butenyl 4-diphosphate. This chain is 4-hydroxy-3-methylbut-2-en-1-yl diphosphate synthase (flavodoxin), found in Thermus thermophilus (strain ATCC 27634 / DSM 579 / HB8).